A 179-amino-acid chain; its full sequence is Adaptation to cold protein A (179 aa).

Residues 133–179 (KATPAPKRSADDDFEDEDSDYADYSDDDDDEGEEEDGYYDHYDDEDR) are disordered. Residues 144-179 (DDFEDEDSDYADYSDDDDDEGEEEDGYYDHYDDEDR) are compositionally biased toward acidic residues.

In terms of biological role, part of an operon involved in cold adaptation. The chain is Adaptation to cold protein A from Shewanella oneidensis (strain ATCC 700550 / JCM 31522 / CIP 106686 / LMG 19005 / NCIMB 14063 / MR-1).